A 400-amino-acid polypeptide reads, in one-letter code: Probable peptidoglycan glycosyltransferase FtsW (400 aa).

Over 1 to 29 (MVIERIKHLASPLQDWVFTPSPKVMFDRQ) the chain is Cytoplasmic. Residues 30–50 (LIWIALGLMLTGLVMVASASF) traverse the membrane as a helical segment. Topologically, residues 51–60 (PISTRLTGQP) are periplasmic. A helical membrane pass occupies residues 61 to 81 (FHFMMRHMLFVFLALSISSIV). Over 82–95 (LRIELNKWLKYSSH) the chain is Cytoplasmic. The chain crosses the membrane as a helical span at residues 96–116 (LLLISLLLLAAVLVVGKSVNG). Residues 117–122 (AARWLP) are Periplasmic-facing. Residues 123–143 (LGIFNLQPAEVAKLSLFVFIA) form a helical membrane-spanning segment. The Cytoplasmic portion of the chain corresponds to 144 to 155 (GYLVRRHGEVRD). The helical transmembrane segment at 156-176 (SFRGFVKPLLVLITLAFFLLM) threads the bilayer. The Periplasmic portion of the chain corresponds to 177–178 (QP). Residues 179–199 (DLGTTVVMFVTTIAMLFIAGA) form a helical membrane-spanning segment. A topological domain (cytoplasmic) is located at residue K200. A helical membrane pass occupies residues 201–221 (LWQFIALVMGGISLVIVLILA). At 222–290 (EPYRMRRVTS…VFAVIAEELG (69 aa)) the chain is on the periplasmic side. Residues 291–311 (FVGVCLVLCLIFALVFKALLI) form a helical membrane-spanning segment. The Cytoplasmic portion of the chain corresponds to 312-321 (GRKCLAHDQR). A helical transmembrane segment spans residues 322–342 (FGGFLAFGIGIWFAFQTLVNV). The Periplasmic portion of the chain corresponds to 343–356 (GAAAGIVPTKGLTL). A helical membrane pass occupies residues 357–377 (PLISYGGSSLIIMSVAVSLLI). Topologically, residues 378–400 (RIDHECRVYLANEPPRSENEEQK) are cytoplasmic.

The protein belongs to the SEDS family. FtsW subfamily.

It localises to the cell inner membrane. The enzyme catalyses [GlcNAc-(1-&gt;4)-Mur2Ac(oyl-L-Ala-gamma-D-Glu-L-Lys-D-Ala-D-Ala)](n)-di-trans,octa-cis-undecaprenyl diphosphate + beta-D-GlcNAc-(1-&gt;4)-Mur2Ac(oyl-L-Ala-gamma-D-Glu-L-Lys-D-Ala-D-Ala)-di-trans,octa-cis-undecaprenyl diphosphate = [GlcNAc-(1-&gt;4)-Mur2Ac(oyl-L-Ala-gamma-D-Glu-L-Lys-D-Ala-D-Ala)](n+1)-di-trans,octa-cis-undecaprenyl diphosphate + di-trans,octa-cis-undecaprenyl diphosphate + H(+). It participates in cell wall biogenesis; peptidoglycan biosynthesis. Its function is as follows. Peptidoglycan polymerase that is essential for cell division. The chain is Probable peptidoglycan glycosyltransferase FtsW from Aliivibrio salmonicida (strain LFI1238) (Vibrio salmonicida (strain LFI1238)).